Here is a 734-residue protein sequence, read N- to C-terminus: Photosystem I P700 chlorophyll a apoprotein A2 (734 aa).

A run of 8 helical transmembrane segments spans residues 46–69 (IFAS…FHVA), 135–158 (LYTG…LHLQ), 175–199 (LNHH…HVAI), 273–291 (MAHH…GHMY), 330–353 (IHFQ…QHMY), 369–395 (AALY…IFFI), 417–439 (AIIS…LYVH), and 517–535 (FLVH…LILV). The [4Fe-4S] cluster site is built by Cys559 and Cys568. The next 2 membrane-spanning stretches (helical) occupy residues 575-596 (AFYL…YWHW) and 643-665 (LSVW…MFLI). Positions 654, 662, and 670 each coordinate chlorophyll a. A phylloquinone-binding site is contributed by Trp671. The helical transmembrane segment at 707–727 (LVGLAHFSVGYIFTYAAFLIA) threads the bilayer.

Belongs to the PsaA/PsaB family. As to quaternary structure, the PsaA/B heterodimer binds the P700 chlorophyll special pair and subsequent electron acceptors. PSI consists of a core antenna complex that captures photons, and an electron transfer chain that converts photonic excitation into a charge separation. The eukaryotic PSI reaction center is composed of at least 11 subunits. The cofactor is P700 is a chlorophyll a/chlorophyll a' dimer, A0 is one or more chlorophyll a, A1 is one or both phylloquinones and FX is a shared 4Fe-4S iron-sulfur center..

It localises to the plastid. The protein localises to the chloroplast thylakoid membrane. It catalyses the reaction reduced [plastocyanin] + hnu + oxidized [2Fe-2S]-[ferredoxin] = oxidized [plastocyanin] + reduced [2Fe-2S]-[ferredoxin]. Functionally, psaA and PsaB bind P700, the primary electron donor of photosystem I (PSI), as well as the electron acceptors A0, A1 and FX. PSI is a plastocyanin-ferredoxin oxidoreductase, converting photonic excitation into a charge separation, which transfers an electron from the donor P700 chlorophyll pair to the spectroscopically characterized acceptors A0, A1, FX, FA and FB in turn. Oxidized P700 is reduced on the lumenal side of the thylakoid membrane by plastocyanin. This chain is Photosystem I P700 chlorophyll a apoprotein A2, found in Helianthus annuus (Common sunflower).